Reading from the N-terminus, the 474-residue chain is Adenosylhomocysteinase (474 aa).

3 residues coordinate substrate: threonine 61, aspartate 136, and glutamate 196. Position 197–199 (197–199 (TTT)) interacts with NAD(+). Residues lysine 226 and aspartate 230 each contribute to the substrate site. NAD(+) contacts are provided by residues asparagine 231, 260 to 265 (GYGDVG), glutamate 283, asparagine 318, 339 to 341 (IGH), and asparagine 384.

Belongs to the adenosylhomocysteinase family. It depends on NAD(+) as a cofactor.

The protein resides in the cytoplasm. It carries out the reaction S-adenosyl-L-homocysteine + H2O = L-homocysteine + adenosine. Its pathway is amino-acid biosynthesis; L-homocysteine biosynthesis; L-homocysteine from S-adenosyl-L-homocysteine: step 1/1. May play a key role in the regulation of the intracellular concentration of adenosylhomocysteine. This is Adenosylhomocysteinase from Ralstonia pickettii (strain 12J).